The chain runs to 281 residues: Elongation factor Ts (281 aa).

Residues 79–82 (TDFV) form an involved in Mg(2+) ion dislocation from EF-Tu region.

The protein belongs to the EF-Ts family.

The protein localises to the cytoplasm. Associates with the EF-Tu.GDP complex and induces the exchange of GDP to GTP. It remains bound to the aminoacyl-tRNA.EF-Tu.GTP complex up to the GTP hydrolysis stage on the ribosome. This chain is Elongation factor Ts, found in Wolbachia pipientis subsp. Culex pipiens (strain wPip).